Consider the following 142-residue polypeptide: Ribonuclease VapC31 (142 aa).

One can recognise a PINc domain in the interval 3-139 (LLDANVLLAA…ARFASVRHIR (137 aa)). Mg(2+) contacts are provided by D5 and D108.

Belongs to the PINc/VapC protein family. The cofactor is Mg(2+).

Toxic component of a type II toxin-antitoxin (TA) system. An RNase. Its toxic effect is neutralized by coexpression with cognate antitoxin VapB31. This is Ribonuclease VapC31 from Mycobacterium tuberculosis (strain CDC 1551 / Oshkosh).